We begin with the raw amino-acid sequence, 119 residues long: Holo-[acyl-carrier-protein] synthase (119 aa).

The Mg(2+) site is built by Asp-8 and Glu-60.

This sequence belongs to the P-Pant transferase superfamily. AcpS family. Requires Mg(2+) as cofactor.

The protein localises to the cytoplasm. It catalyses the reaction apo-[ACP] + CoA = holo-[ACP] + adenosine 3',5'-bisphosphate + H(+). In terms of biological role, transfers the 4'-phosphopantetheine moiety from coenzyme A to a Ser of acyl-carrier-protein. The polypeptide is Holo-[acyl-carrier-protein] synthase (Staphylococcus haemolyticus (strain JCSC1435)).